Consider the following 189-residue polypeptide: Segregation and condensation protein B (189 aa).

This sequence belongs to the ScpB family. As to quaternary structure, homodimer. Homodimerization may be required to stabilize the binding of ScpA to the Smc head domains. Component of a cohesin-like complex composed of ScpA, ScpB and the Smc homodimer, in which ScpA and ScpB bind to the head domain of Smc. The presence of the three proteins is required for the association of the complex with DNA.

It localises to the cytoplasm. Functionally, participates in chromosomal partition during cell division. May act via the formation of a condensin-like complex containing Smc and ScpA that pull DNA away from mid-cell into both cell halves. The polypeptide is Segregation and condensation protein B (Lachnoclostridium phytofermentans (strain ATCC 700394 / DSM 18823 / ISDg) (Clostridium phytofermentans)).